We begin with the raw amino-acid sequence, 514 residues long: L-threonine dehydratase biosynthetic IlvA (514 aa).

Position 62 is an N6-(pyridoxal phosphate)lysine (K62). Pyridoxal 5'-phosphate contacts are provided by residues N89, 188-192, and S315; that span reads GGGGL. ACT-like domains lie at 339–411 and 434–504; these read ALLA…DLSD and RLYS…DETN.

It belongs to the serine/threonine dehydratase family. As to quaternary structure, homotetramer. Pyridoxal 5'-phosphate serves as cofactor.

It catalyses the reaction L-threonine = 2-oxobutanoate + NH4(+). Its pathway is amino-acid biosynthesis; L-isoleucine biosynthesis; 2-oxobutanoate from L-threonine: step 1/1. Its activity is regulated as follows. Isoleucine allosterically inhibits whereas valine allosterically activates this enzyme. Catalyzes the anaerobic formation of alpha-ketobutyrate and ammonia from threonine in a two-step reaction. The first step involved a dehydration of threonine and a production of enamine intermediates (aminocrotonate), which tautomerizes to its imine form (iminobutyrate). Both intermediates are unstable and short-lived. The second step is the nonenzymatic hydrolysis of the enamine/imine intermediates to form 2-ketobutyrate and free ammonia. In the low water environment of the cell, the second step is accelerated by RidA. The sequence is that of L-threonine dehydratase biosynthetic IlvA (ilvA) from Escherichia coli (strain K12).